Here is a 345-residue protein sequence, read N- to C-terminus: Phosphoribosylformylglycinamidine cyclo-ligase (345 aa).

Belongs to the AIR synthase family.

The protein localises to the cytoplasm. The catalysed reaction is 2-formamido-N(1)-(5-O-phospho-beta-D-ribosyl)acetamidine + ATP = 5-amino-1-(5-phospho-beta-D-ribosyl)imidazole + ADP + phosphate + H(+). The protein operates within purine metabolism; IMP biosynthesis via de novo pathway; 5-amino-1-(5-phospho-D-ribosyl)imidazole from N(2)-formyl-N(1)-(5-phospho-D-ribosyl)glycinamide: step 2/2. This Limosilactobacillus fermentum (strain NBRC 3956 / LMG 18251) (Lactobacillus fermentum) protein is Phosphoribosylformylglycinamidine cyclo-ligase.